Reading from the N-terminus, the 226-residue chain is MNHIVANKIQQILGYTFTHQELLKQALTHRSASSKHNERLEFLGDSILSFVIANALYQHFPYIDEGDMSRMRATLVRGNTLAEIAYEFDLGEYLQLGQGELKSGGFRRESILANTVEALIGSIYLDSNIKTVEELILKWYEKRLEKISPGDTQKDPKTRLQEYLQSKHLSLPSYFIVEVYGEAHNQLFTIHCEVSTLSTSFIGKGTSRRKAEQDAARKALIKLGVE.

An RNase III domain is found at 6-128 (ANKIQQILGY…LIGSIYLDSN (123 aa)). Mg(2+) is bound at residue Glu41. Asp45 is an active-site residue. Positions 114 and 117 each coordinate Mg(2+). Glu117 is a catalytic residue. The region spanning 155 to 225 (DPKTRLQEYL…ARKALIKLGV (71 aa)) is the DRBM domain.

Belongs to the ribonuclease III family. As to quaternary structure, homodimer. Mg(2+) serves as cofactor.

The protein resides in the cytoplasm. It catalyses the reaction Endonucleolytic cleavage to 5'-phosphomonoester.. Its function is as follows. Digests double-stranded RNA. Involved in the processing of primary rRNA transcript to yield the immediate precursors to the large and small rRNAs (23S and 16S). Processes some mRNAs, and tRNAs when they are encoded in the rRNA operon. Processes pre-crRNA and tracrRNA of type II CRISPR loci if present in the organism. The sequence is that of Ribonuclease 3 from Buchnera aphidicola subsp. Schizaphis graminum (strain Sg).